The following is a 997-amino-acid chain: NLR family CARD domain-containing protein 4 (997 aa).

Residues 1–88 form the CARD domain; sequence MDLIRKNYAE…FFYEDLIGQR (88 aa). Positions 95–300 are nucleotide-binding domain (NBD); it reads EEDLENLADH…RCGALIAETS (206 aa). An NACHT domain is found at 165–478; the sequence is SPCVIEGEAG…VTKGEDFLNK (314 aa). ATP is bound at residue 171 to 178; sequence GEAGKGKT. The interval 358–465 is winged-helix domain (WHD); it reads MNTQTTLFST…RLSQLLSSED (108 aa). LRR repeat units follow at residues 550–570, 629–652, 708–731, 735–758, 760–785, 797–820, 821–843, 851–875, 884–905, 908–935, 937–958, and 972–994; these read LFSE…HIEF, NQSI…DIKY, MTEM…LLEG, LVGL…TLAE, ILSL…ESIA, ELKL…LYSL, SHIE…SVEE, LDAI…VLPT, ELAF…SYIN, FENL…ILQY, PNLT…DLVR, and TMEL…AKNM.

Its subcellular location is the cytoplasm. The protein resides in the cytosol. Functionally, key component of inflammasomes that indirectly senses specific proteins from pathogenic bacteria and fungi and responds by assembling an inflammasome complex that promotes caspase-1 activation, cytokine production and macrophage pyroptosis. This is NLR family CARD domain-containing protein 4 (nlrc4) from Xenopus tropicalis (Western clawed frog).